We begin with the raw amino-acid sequence, 500 residues long: Probable malate:quinone oxidoreductase (500 aa).

This sequence belongs to the MQO family. FAD serves as cofactor.

The catalysed reaction is (S)-malate + a quinone = a quinol + oxaloacetate. The protein operates within carbohydrate metabolism; tricarboxylic acid cycle; oxaloacetate from (S)-malate (quinone route): step 1/1. The sequence is that of Probable malate:quinone oxidoreductase from Bacillus cereus (strain ATCC 10987 / NRS 248).